The following is a 134-amino-acid chain: Small ribosomal subunit protein uS8c (134 aa).

The protein belongs to the universal ribosomal protein uS8 family. Part of the 30S ribosomal subunit.

The protein resides in the plastid. It localises to the chloroplast. In terms of biological role, one of the primary rRNA binding proteins, it binds directly to 16S rRNA central domain where it helps coordinate assembly of the platform of the 30S subunit. The protein is Small ribosomal subunit protein uS8c (rps8) of Nicotiana tomentosiformis (Tobacco).